An 813-amino-acid polypeptide reads, in one-letter code: Putative ATPase, plasma membrane-like (813 aa).

Residues 1–66 (MATGDSLEDI…KKKEHITLRF (66 aa)) are Cytoplasmic-facing. The helical transmembrane segment at 67-86 (FALMFKPLSWVIQAAAIMAM) threads the bilayer. The Extracellular portion of the chain corresponds to 87–94 (LFANGDGR). The chain crosses the membrane as a helical span at residues 95–115 (QLFLGIVCLLIVNTIICYLKE). The Cytoplasmic portion of the chain corresponds to 116–245 (DDAANVVAMA…GHFRKVVTEI (130 aa)). Residues 246 to 266 (ENLCVISIAIGISIEVIVMYW) form a helical membrane-spanning segment. Topologically, residues 267–275 (IQRRNFSDV) are extracellular. A helical transmembrane segment spans residues 276-293 (INNLLVLVIGGIPLAMPT). Topologically, residues 294 to 555 (VLYVIMVTGS…ASRAILQQMK (262 aa)) are cytoplasmic. Asp331 serves as the catalytic 4-aspartylphosphate intermediate. Residues Asp500 and Asp504 each coordinate Mg(2+). The helical transmembrane segment at 556–577 (HYTIYAVSITIRVVFGFMFIAL) threads the bilayer. The Extracellular portion of the chain corresponds to 578 to 582 (IWKFD). A helical membrane pass occupies residues 583–605 (FSPFMVLAIALLNEETTKAITMD). At 606-622 (NVTNPSPTPDSLKLKEI) the chain is on the cytoplasmic side. A helical transmembrane segment spans residues 623–643 (FATGVVYGSYMALITVVFFWA). Residues 644–664 (AYRTDIFPRTFHVRDLRGNEA) lie on the Extracellular side of the membrane. Residues 665–685 (EMMCALYLQVSIMSQALFFVI) traverse the membrane as a helical segment. Over 686–697 (QSRSWFFVERPG) the chain is Cytoplasmic. A helical membrane pass occupies residues 698 to 718 (ELLFLSFVTVQTIATTLAVYA). At 719-726 (SWETARIE) the chain is on the extracellular side. A helical transmembrane segment spans residues 727–747 (GIGWSWAGVIWLYNIIFFFPL). Topologically, residues 748 to 813 (DIMKFGIRYI…SQDLRGVGWV (66 aa)) are cytoplasmic. Phosphoserine is present on Ser776.

Belongs to the cation transport ATPase (P-type) (TC 3.A.3) family. Type IIIA subfamily.

It localises to the membrane. The polypeptide is Putative ATPase, plasma membrane-like (Arabidopsis thaliana (Mouse-ear cress)).